Consider the following 349-residue polypeptide: uncharacterized protein (349 aa).

Positions 116-135 are enriched in polar residues; that stretch reads HFSQTNPKSTPEPPCTSSSG. A disordered region spans residues 116 to 148; that stretch reads HFSQTNPKSTPEPPCTSSSGAGDCHENLPADGY.

This is an uncharacterized protein from Caenorhabditis elegans.